Consider the following 458-residue polypeptide: Protein adenylyltransferase FICD (458 aa).

Over 1 to 23 (MMLIPMASVMAVTEPKWVSVWSR) the chain is Cytoplasmic. A helical; Signal-anchor for type II membrane protein membrane pass occupies residues 24 to 44 (FLWVTLLSMVLGSLLALLLPL). Residues 45-458 (GAVEEQCLAV…GFKETLPVKP (414 aa)) are Lumenal-facing. Position 79 is an O-AMP-serine; by autocatalysis (S79). T80 is subject to O-AMP-threonine; by autocatalysis. 2 TPR repeats span residues 106 to 139 (ARAA…DPDF) and 140 to 173 (VDAL…SPYH). O-AMP-threonine; by autocatalysis is present on T183. The Inhibitory (S/T)XXXE(G/N) motif motif lies at 230–235 (TVAIEG). E234 serves as a coordination point for ATP. N275 carries N-linked (GlcNAc...) asparagine glycosylation. In terms of domain architecture, Fido spans 285 to 420 (VTISDVLEIH…VRPFIRFIAK (136 aa)). 316-319 (VGHH) provides a ligand contact to ATP. Residue H363 is part of the active site. ATP is bound by residues 367 to 374 (DGNGRTSR), 399 to 400 (YY), and N407. N-linked (GlcNAc...) asparagine glycosylation occurs at N446.

It belongs to the fic family. As to quaternary structure, homodimer. Interacts with HD. Mg(2+) is required as a cofactor. It depends on Mn(2+) as a cofactor. In terms of processing, auto-AMPylated in vitro; it is unclear whether auto-AMPylation is relevant in vivo. Post-translationally, N-glycosylated; predominantly glycosylated at Asn-275. As to expression, ubiquitous.

It localises to the endoplasmic reticulum membrane. It carries out the reaction L-tyrosyl-[protein] + ATP = O-(5'-adenylyl)-L-tyrosyl-[protein] + diphosphate. The enzyme catalyses 3-O-(5'-adenylyl)-L-threonyl-[protein] + H2O = L-threonyl-[protein] + AMP + H(+). The catalysed reaction is L-threonyl-[protein] + ATP = 3-O-(5'-adenylyl)-L-threonyl-[protein] + diphosphate. The side chain of Glu-234 determines which of the two opposing activities (AMPylase or de-AMPylase) will take place. In response to endoplasmic reticulum stress, mediates de-AMPylase activity. Adenylyltransferase activity is inhibited by the inhibitory helix present at the N-terminus: Glu-234 binds ATP and competes with ATP-binding at Arg-374, thereby preventing adenylyltransferase activity. In unstressed cells, disengagement of Glu-234 promotes adenylyltransferase activity. Activation dissociates ATP-binding from Glu-234, allowing ordered binding of the entire ATP moiety with the alpha-phosphate in an orientation that is productive for accepting an incoming target hydroxyl side chain. Functionally, protein that can both mediate the addition of adenosine 5'-monophosphate (AMP) to specific residues of target proteins (AMPylation), and the removal of the same modification from target proteins (de-AMPylation), depending on the context. The side chain of Glu-231 determines which of the two opposing activities (AMPylase or de-AMPylase) will take place. Acts as a key regulator of the ERN1/IRE1-mediated unfolded protein response (UPR) by mediating AMPylation or de-AMPylation of HSPA5/BiP. In unstressed cells, acts as an adenylyltransferase by mediating AMPylation of HSPA5/BiP at 'Thr-518', thereby inactivating it. In response to endoplasmic reticulum stress, acts as a phosphodiesterase by mediating removal of ATP (de-AMPylation) from HSPA5/BiP at 'Thr-518', leading to restore HSPA5/BiP activity. Although it is able to AMPylate RhoA, Rac and Cdc42 Rho GTPases in vitro, Rho GTPases do not constitute physiological substrates. In Homo sapiens (Human), this protein is Protein adenylyltransferase FICD.